We begin with the raw amino-acid sequence, 406 residues long: Arginine deiminase (406 aa).

The active-site Amidino-cysteine intermediate is the C396.

It belongs to the arginine deiminase family.

Its subcellular location is the cytoplasm. It catalyses the reaction L-arginine + H2O = L-citrulline + NH4(+). It participates in amino-acid degradation; L-arginine degradation via ADI pathway; carbamoyl phosphate from L-arginine: step 1/2. The sequence is that of Arginine deiminase from Vibrio vulnificus (strain CMCP6).